Consider the following 259-residue polypeptide: uncharacterized protein (259 aa).

An N-terminal signal peptide occupies residues 1 to 22; that stretch reads MKHSKKLLLCISFLLITVFISG. The N-palmitoyl cysteine moiety is linked to residue Cys-23. The S-diacylglycerol cysteine moiety is linked to residue Cys-23.

Belongs to the staphylococcal tandem lipoprotein family.

The protein localises to the cell membrane. This is an uncharacterized protein from Staphylococcus epidermidis (strain ATCC 35984 / DSM 28319 / BCRC 17069 / CCUG 31568 / BM 3577 / RP62A).